Here is a 262-residue protein sequence, read N- to C-terminus: MAVVTMKQLLESGVHFGHQTRRWNPKMKDYIFTERNGIYIIDLQKTVALLDKAYDYVRDMASKGKTILFVGTKKQAQETIKTEAERCGMPYVNQRWLGGMLTNFRTIKKRVKRLNELEKMEEDGLFEVLPKKEVILLKKERDKLERFLGGIRDMKNLPDVVYITDPRKESIAVAEARKLNIPIVSIVDTNCDPDLIDYIIPGNDDAIRAVKLISSKIADAVLAGKQGEQLTEEAKPEDKEDEKGQAEEKEVKEENNSANKEE.

The interval 225–262 (KQGEQLTEEAKPEDKEDEKGQAEEKEVKEENNSANKEE) is disordered. The span at 232 to 262 (EEAKPEDKEDEKGQAEEKEVKEENNSANKEE) shows a compositional bias: basic and acidic residues.

The protein belongs to the universal ribosomal protein uS2 family.

The protein is Small ribosomal subunit protein uS2 of Halothermothrix orenii (strain H 168 / OCM 544 / DSM 9562).